A 156-amino-acid chain; its full sequence is Small ribosomal subunit protein uS7 (156 aa).

Belongs to the universal ribosomal protein uS7 family. In terms of assembly, part of the 30S ribosomal subunit. Contacts proteins S9 and S11.

Its function is as follows. One of the primary rRNA binding proteins, it binds directly to 16S rRNA where it nucleates assembly of the head domain of the 30S subunit. Is located at the subunit interface close to the decoding center, probably blocks exit of the E-site tRNA. This chain is Small ribosomal subunit protein uS7, found in Desulfosudis oleivorans (strain DSM 6200 / JCM 39069 / Hxd3) (Desulfococcus oleovorans).